The sequence spans 121 residues: Putative iron-sulfur cluster insertion protein ErpA 1 (121 aa).

Residues Cys-49, Cys-113, and Cys-115 each contribute to the iron-sulfur cluster site.

Belongs to the HesB/IscA family. Homodimer. It depends on iron-sulfur cluster as a cofactor.

In terms of biological role, required for insertion of 4Fe-4S clusters. The polypeptide is Putative iron-sulfur cluster insertion protein ErpA 1 (Polaromonas naphthalenivorans (strain CJ2)).